A 242-amino-acid polypeptide reads, in one-letter code: uncharacterized protein (242 aa).

A Response regulatory domain is found at 3 to 116; the sequence is TALVIDDEPF…RLRKTVKRLS (114 aa). Residue Asp-54 is modified to 4-aspartylphosphate. Residues 139–240 form the HTH LytTR-type domain; the sequence is IPCIGHNRIV…LKLLKEMLGL (102 aa).

This is an uncharacterized protein from Vibrio vulnificus (strain CMCP6).